The sequence spans 727 residues: MTPVQVPNLDVSVTSSLITTAPVTGNAATISTFTPGSPEPSMNGEEKESSYFPISENDDGTLDLFGDSELEKEQKGDNQETDYSSQYLHPTPPYTNFDDESPSSPTHPSVSNITVDGDSKKHSLQLQEEEKSSESLDSHTHPPKRVRNEDDSLTFSKTSPVSPSSLKDGASNTVTNDASNKIKSEASESASPSALQALDSTAAGSSKEHSSPHDETVKKEENDKDQYPPMTKEQHKYIHAMLRQLRRGRDSIPFRAPVDPVKQNIPDYPTIIKNPIDLGTMQKKFSSGVYSSAQHFIDDMNLMFSNCFLYNGTESPVGVMGKNLQATFERQLKQLPSAYVTSYSRPGRRPRSMTAPKGGARTRRQAAMYSNSSSGIRETMYDLKPHRRKDAAEMKFCQSVLKELLKKQHEAYAYPFYKPVNPTACGCPDYFKVIKHPMDLGTMQNKLNHNEYASMKAFEADMVLMFKNCYKFNSAGTPVHLMGKKLESIFQKLWANKPDFDSETYMGMSSVNTDYYYGDNEVFDSGDEFLEDDGEEFEAVNRQIHKLQSTLQAMKSRARSSSVSRRSRSRSLSVDIYPPITYEMQNELAEQCNYLSADQLSHVAEILRAALPHLRNTDEIEIDVSAMPPDVFYKVYYYVCKGDEIGAEALATASHTHQEKKKGRALSETEQAEKIRQLRAQLDRFSGIAQNKNTVTGNIAAYNTKSLGSDDSSSEDDGESSESSDSA.

2 disordered regions span residues 27–231 and 341–369; these read AATI…PPMT and TSYS…AAMY. Acidic residues predominate over residues 56–68; it reads ENDDGTLDLFGDS. A compositionally biased stretch (basic and acidic residues) spans 69–78; the sequence is ELEKEQKGDN. Polar residues predominate over residues 102 to 114; it reads PSSPTHPSVSNIT. Residues 128 to 150 are compositionally biased toward basic and acidic residues; that stretch reads EEEKSSESLDSHTHPPKRVRNED. Residues 153–177 are compositionally biased toward polar residues; sequence LTFSKTSPVSPSSLKDGASNTVTND. At S162 the chain carries Phosphoserine. Positions 206-231 are enriched in basic and acidic residues; sequence SKEHSSPHDETVKKEENDKDQYPPMT. The Bromo 1 domain occupies 229–335; sequence PMTKEQHKYI…ATFERQLKQL (107 aa). One can recognise a Bromo 2 domain in the interval 388-497; that stretch reads RKDAAEMKFC…SIFQKLWANK (110 aa). The 81-residue stretch at 570–650 folds into the NET domain; sequence RSLSVDIYPP…KGDEIGAEAL (81 aa). The segment at 699-727 is disordered; sequence IAAYNTKSLGSDDSSSEDDGESSESSDSA. The segment covering 712 to 727 has biased composition (acidic residues); it reads SSSEDDGESSESSDSA.

Belongs to the BET family.

It is found in the nucleus. In Schizosaccharomyces pombe (strain 972 / ATCC 24843) (Fission yeast), this protein is Bromodomain-containing protein C631.02.